A 355-amino-acid polypeptide reads, in one-letter code: Probable nitronate monooxygenase (355 aa).

FMN-binding positions include N71, Q175, G180, G219, and 238–241 (QMGT).

It belongs to the nitronate monooxygenase family. NMO class I subfamily. FMN is required as a cofactor.

It catalyses the reaction 3 propionate 3-nitronate + 3 O2 + H2O = 3 3-oxopropanoate + 2 nitrate + nitrite + H2O2 + 3 H(+). Its function is as follows. Nitronate monooxygenase that uses molecular oxygen to catalyze the oxidative denitrification of alkyl nitronates. Acts on propionate 3-nitronate (P3N), the presumed physiological substrate. Probably functions in the detoxification of P3N, a metabolic poison produced by plants and fungi as a defense mechanism. This chain is Probable nitronate monooxygenase, found in Staphylococcus saprophyticus subsp. saprophyticus (strain ATCC 15305 / DSM 20229 / NCIMB 8711 / NCTC 7292 / S-41).